The primary structure comprises 204 residues: bMERB domain-containing protein 1 (204 aa).

In terms of domain architecture, bMERB spans 3-150 (LKQSLSTHLE…EQEEDKEMAD (148 aa)). The tract at residues 162–187 (VTKSPASSRAEKKAEPPPSKPTVAKT) is disordered.

The protein is bMERB domain-containing protein 1 (BMERB1) of Pongo abelii (Sumatran orangutan).